The sequence spans 191 residues: Peptidyl-tRNA hydrolase (191 aa).

Y16 serves as a coordination point for tRNA. Residue H21 is the Proton acceptor of the active site. TRNA contacts are provided by F67, N69, and N115.

Belongs to the PTH family. In terms of assembly, monomer.

It is found in the cytoplasm. The enzyme catalyses an N-acyl-L-alpha-aminoacyl-tRNA + H2O = an N-acyl-L-amino acid + a tRNA + H(+). Functionally, hydrolyzes ribosome-free peptidyl-tRNAs (with 1 or more amino acids incorporated), which drop off the ribosome during protein synthesis, or as a result of ribosome stalling. Catalyzes the release of premature peptidyl moieties from peptidyl-tRNA molecules trapped in stalled 50S ribosomal subunits, and thus maintains levels of free tRNAs and 50S ribosomes. This is Peptidyl-tRNA hydrolase from Ruthia magnifica subsp. Calyptogena magnifica.